The chain runs to 350 residues: Phosphotriesterase-related protein (350 aa).

His22, His24, Glu169, His201, His230, and Asp298 together coordinate a divalent metal cation.

Belongs to the metallo-dependent hydrolases superfamily. Phosphotriesterase family. A divalent metal cation is required as a cofactor.

This chain is Phosphotriesterase-related protein, found in Drosophila pseudoobscura pseudoobscura (Fruit fly).